The primary structure comprises 748 residues: MLTRLREIVEKVASAPRLNEALNILVTDICLAMDTEVCSVYLADHDRRCYYLMATRGLKKPRGRTVALAFDEGIVGLVGRLAEPINLADAQKHPSFKYIPSVKEERFRAFLGVPIIQRRQLLGVLVVQQRELRQYDESEESFLVTLATQMAAILSQSQVTALFGQYRQTRIRALPAAPGVAIATGWQDATMPLMEQVYEASTLDTSLERERLTGALEEAANEFRRYSKRFAAGAQKETAAIFDLYSHLLSDARLRRELFAEVDKGAVAEWAVKKIIEKFAEQFAALTDNYLKERAGDLRTLGQRLLFHLDDSVQGPNAWPERFILVADELSATTLAELPQDRLAGVVVRDGAANSHAAIMVRALGIPTVMGADIQPSVLHRRTLVVDGYRGELLVDPEPVLIQEYQRLISEEIELSRLAEDDVNLPAQLKSGERVKVMLNAGLSPEHEEKLGSRIDGIGLYRTEIPFMLQSGFPSEEEQVAQYQGMLQMFNDKPVTLRTLDVGADKQLPYMPISEENPCLGWRGIRITLDQPEIFLIQVRAMLRANAATGNLSILLPMVTSIDEVDEARRLIERAGREVEEMIGYAIPKPRIGIMLEVPSMVFMLPHLANRIDFISVGTNDLTQYILAVDRNNTRVASIYDSLHPAMLRALSMIAQEAEKHGLDLRLCGEMAGDPMCVAILIGLGYRHLSMNGRSVARVKYLLRHIDFEDAQTLARRSLEAQMATEVRHQVAAFMERRGMGGLIRGGL.

The GAF domain maps to 1 to 127 (MLTRLREIVE…RRQLLGVLVV (127 aa)). Residues 128-170 (QQRELRQYDESEESFLVTLATQMAAILSQSQVTALFGQYRQTR) form a linker region. A PTS EI region spans residues 171–748 (IRALPAAPGV…GMGGLIRGGL (578 aa)). Residue His356 is the Tele-phosphohistidine intermediate of the active site. Phosphoenolpyruvate is bound by residues Arg462 and Arg498. 2 residues coordinate Mg(2+): Glu597 and Asp621. Phosphoenolpyruvate is bound by residues 620–621 (ND) and Arg631. Cys668 (proton donor) is an active-site residue.

This sequence belongs to the PEP-utilizing enzyme family. It depends on Mg(2+) as a cofactor.

It localises to the cytoplasm. The catalysed reaction is L-histidyl-[protein] + phosphoenolpyruvate = N(pros)-phospho-L-histidyl-[protein] + pyruvate. In terms of biological role, component of the phosphoenolpyruvate-dependent nitrogen-metabolic phosphotransferase system (nitrogen-metabolic PTS), that seems to be involved in regulating nitrogen metabolism. Enzyme I-Ntr transfers the phosphoryl group from phosphoenolpyruvate (PEP) to the phosphoryl carrier protein (NPr). Could function in the transcriptional regulation of sigma-54 dependent operons in conjunction with the NPr (PtsO) and EIIA-Ntr (PtsN) proteins. Enzyme I-Ntr is specific for NPr. The protein is Phosphoenolpyruvate-dependent phosphotransferase system (ptsP) of Salmonella typhimurium (strain LT2 / SGSC1412 / ATCC 700720).